The chain runs to 305 residues: MAFAMSSSLTLFQYQSFGKKPFFSRRRDFAGCSMMNPLVARCNRATEICCVVRKDGEAESLVEAENDQLEEEVMKPTSIDSFSVVLRSERKKAERRTYLVAAMASSLGFTFMAAAAVYYRFAWQMEGGAVPLTEMMGTFSLAVGSAVGMEYWARWAHRALWHTSLWHMHESHHRPRDGPFELNDVFALINAFPAVALLAFGFFHRGFFSGLCFGAGLGITLYGMAYMFVHDGLVHRRFPVGPIATVPYFQWVAAAHQIHHADKFNGVPYGLFLGHKELEEVGGMEALEREIKRGVKVFSSSPNQS.

Residues 1–41 (MAFAMSSSLTLFQYQSFGKKPFFSRRRDFAGCSMMNPLVAR) constitute a chloroplast transit peptide. The next 2 helical transmembrane spans lie at 98 to 118 (YLVAAMASSLGFTFMAAAAVY) and 129 to 149 (AVPLTEMMGTFSLAVGSAVGM). The region spanning 146–272 (AVGMEYWARW…KFNGVPYGLF (127 aa)) is the Fatty acid hydroxylase domain. The short motif at 157–162 (HRALWH) is the Histidine box-1 element. The short motif at 169–173 (HESHH) is the Histidine box-2 element. The next 2 helical transmembrane spans lie at 184–204 (DVFALINAFPAVALLAFGFFH) and 207–227 (FFSGLCFGAGLGITLYGMAYM). The Histidine box-3 signature appears at 230–235 (HDGLVH). The short motif at 256 to 260 (HQIHH) is the Histidine box-4 element.

It belongs to the sterol desaturase family. In terms of assembly, homodimer. Expressed in flower buds and lips. Detected in roots and leaves.

The protein localises to the plastid. It localises to the chloroplast membrane. It carries out the reaction all-trans-beta-carotene + 4 reduced [2Fe-2S]-[ferredoxin] + 2 O2 + 4 H(+) = all-trans-zeaxanthin + 4 oxidized [2Fe-2S]-[ferredoxin] + 2 H2O. Functionally, nonheme diiron monooxygenase involved in the biosynthesis of xanthophylls. Specific for beta-ring hydroxylations of beta-carotene. Uses ferredoxin as an electron donor. This is Beta-carotene 3-hydroxylase, chloroplastic (BHY) from Oncidium hybrid cultivar (Orchid).